Reading from the N-terminus, the 219-residue chain is 7-cyano-7-deazaguanine synthase 2 (219 aa).

8–18 lines the ATP pocket; sequence YSGGMDSFTAL. Residues Cys185, Cys193, Cys196, and Cys199 each coordinate Zn(2+).

This sequence belongs to the QueC family. Requires Zn(2+) as cofactor.

It catalyses the reaction 7-carboxy-7-deazaguanine + NH4(+) + ATP = 7-cyano-7-deazaguanine + ADP + phosphate + H2O + H(+). Its pathway is purine metabolism; 7-cyano-7-deazaguanine biosynthesis. In terms of biological role, catalyzes the ATP-dependent conversion of 7-carboxy-7-deazaguanine (CDG) to 7-cyano-7-deazaguanine (preQ(0)). The sequence is that of 7-cyano-7-deazaguanine synthase 2 from Colwellia psychrerythraea (strain 34H / ATCC BAA-681) (Vibrio psychroerythus).